The chain runs to 226 residues: ATP synthase subunit a (226 aa).

The next 5 helical transmembrane spans lie at 17–37 (FNYLFHLILVAIIVLIVAKLA), 79–99 (LVATIGLIVLTSNVIGIIPGF), 105–125 (SLNLTLCLALSVFLYYNFEGI), 168–188 (FGNIKGDDLFLMVVLSLAPWV), and 200–222 (MALLQTFIFMILTYVYLAGAVVV).

Belongs to the ATPase A chain family. In terms of assembly, F-type ATPases have 2 components, CF(1) - the catalytic core - and CF(0) - the membrane proton channel. CF(1) has five subunits: alpha(3), beta(3), gamma(1), delta(1), epsilon(1). CF(0) has three main subunits: a(1), b(2) and c(9-12). The alpha and beta chains form an alternating ring which encloses part of the gamma chain. CF(1) is attached to CF(0) by a central stalk formed by the gamma and epsilon chains, while a peripheral stalk is formed by the delta and b chains.

The protein resides in the cell inner membrane. Its function is as follows. Key component of the proton channel; it plays a direct role in the translocation of protons across the membrane. This chain is ATP synthase subunit a, found in Campylobacter fetus subsp. fetus (strain 82-40).